Here is a 441-residue protein sequence, read N- to C-terminus: UDP-N-acetylmuramoylalanine--D-glutamate ligase (441 aa).

112–118 serves as a coordination point for ATP; sequence GTNGKTT.

It belongs to the MurCDEF family.

The protein resides in the cytoplasm. The enzyme catalyses UDP-N-acetyl-alpha-D-muramoyl-L-alanine + D-glutamate + ATP = UDP-N-acetyl-alpha-D-muramoyl-L-alanyl-D-glutamate + ADP + phosphate + H(+). It functions in the pathway cell wall biogenesis; peptidoglycan biosynthesis. In terms of biological role, cell wall formation. Catalyzes the addition of glutamate to the nucleotide precursor UDP-N-acetylmuramoyl-L-alanine (UMA). This is UDP-N-acetylmuramoylalanine--D-glutamate ligase from Gloeobacter violaceus (strain ATCC 29082 / PCC 7421).